Reading from the N-terminus, the 353-residue chain is tRNA-specific 2-thiouridylase MnmA (353 aa).

ATP is bound by residues 6 to 13 (GMSGGVDS) and Leu32. Catalysis depends on Cys99, which acts as the Nucleophile. Cys99 and Cys197 are disulfide-bonded. Gly124 contacts ATP. Residues 147-149 (KDQ) are interaction with tRNA. Cys197 serves as the catalytic Cysteine persulfide intermediate. The tract at residues 303-304 (RY) is interaction with tRNA.

The protein belongs to the MnmA/TRMU family.

It is found in the cytoplasm. It catalyses the reaction S-sulfanyl-L-cysteinyl-[protein] + uridine(34) in tRNA + AH2 + ATP = 2-thiouridine(34) in tRNA + L-cysteinyl-[protein] + A + AMP + diphosphate + H(+). Functionally, catalyzes the 2-thiolation of uridine at the wobble position (U34) of tRNA, leading to the formation of s(2)U34. The chain is tRNA-specific 2-thiouridylase MnmA from Persephonella marina (strain DSM 14350 / EX-H1).